The chain runs to 139 residues: Large ribosomal subunit protein uL16 (139 aa).

Positions 1-13 (MLQPARRKYRKEQ) are enriched in basic residues. The tract at residues 1–23 (MLQPARRKYRKEQKGRNTGISHS) is disordered.

It belongs to the universal ribosomal protein uL16 family. Part of the 50S ribosomal subunit.

Functionally, binds 23S rRNA and is also seen to make contacts with the A and possibly P site tRNAs. The protein is Large ribosomal subunit protein uL16 of Herminiimonas arsenicoxydans.